A 224-amino-acid polypeptide reads, in one-letter code: UPF0758 protein AFE_0358 (224 aa).

Residues 102–224 (GLDSPLRVRQ…PLSLREQGGW (123 aa)) enclose the MPN domain. His-173, His-175, and Asp-186 together coordinate Zn(2+). The JAMM motif motif lies at 173–186 (HNHPSGVAEPSAAD).

Belongs to the UPF0758 family.

In Acidithiobacillus ferrooxidans (strain ATCC 23270 / DSM 14882 / CIP 104768 / NCIMB 8455) (Ferrobacillus ferrooxidans (strain ATCC 23270)), this protein is UPF0758 protein AFE_0358.